Reading from the N-terminus, the 166-residue chain is Thiol peroxidase (166 aa).

The region spanning 18–166 (LKVGDKAPDV…NYEALLKVLK (149 aa)) is the Thioredoxin domain. Cys-60 functions as the Cysteine sulfenic acid (-SOH) intermediate in the catalytic mechanism. Cys-60 and Cys-94 form a disulfide bridge.

It belongs to the peroxiredoxin family. Tpx subfamily. Homodimer.

It carries out the reaction a hydroperoxide + [thioredoxin]-dithiol = an alcohol + [thioredoxin]-disulfide + H2O. Functionally, thiol-specific peroxidase that catalyzes the reduction of hydrogen peroxide and organic hydroperoxides to water and alcohols, respectively. Plays a role in cell protection against oxidative stress by detoxifying peroxides. The protein is Thiol peroxidase of Helicobacter pylori (strain J99 / ATCC 700824) (Campylobacter pylori J99).